Here is a 975-residue protein sequence, read N- to C-terminus: Nesprin-3 (975 aa).

Over 1–925 (MTQQPQEDFE…PCSLLQKACR (925 aa)) the chain is Cytoplasmic. Spectrin repeat units lie at residues 220–325 (QDHE…RLRG) and 647–740 (REHC…QALR). The disordered stretch occupies residues 778–798 (LINPQDPIPRRQHGANPLEGH). Residues 917–975 (CSLLQKACRVALPLQLLLLLFLLLLFLLPAGEEERSCALANNFARSFALMLRYNGPPPT) form the KASH domain. A helical; Anchor for type IV membrane protein transmembrane segment spans residues 926-946 (VALPLQLLLLLFLLLLFLLPA). Over 947–975 (GEEERSCALANNFARSFALMLRYNGPPPT) the chain is Perinuclear space.

Belongs to the nesprin family. Core component of LINC complexes which are composed of inner nuclear membrane SUN domain-containing proteins coupled to outer nuclear membrane KASH domain-containing nesprins. SUN and KASH domain-containing proteins seem to bind each other promiscuously; however, differentially expression of LINC complex constituents can give rise to specific assemblies. Interacts with SUN1 and SUN2; probably forming respective LINC complexes. Interacts with PLEC (via actin-binding domain). Interacts with DST. Interacts with SYNE1. Interacts (via KASH domain) with TOR1A (ATP-bound); the interaction is required for SYNE3 nuclear envelope localization. Post-translationally, the disulfid bond with SUN1 or SUN2 is required for stability of the respective LINC complex under tensile forces. In terms of tissue distribution, ubiquitous.

It localises to the nucleus outer membrane. The protein localises to the nucleus envelope. It is found in the rough endoplasmic reticulum. Functionally, as a component of the LINC (LInker of Nucleoskeleton and Cytoskeleton) complex involved in the connection between the nuclear lamina and the cytoskeleton. The nucleocytoplasmic interactions established by the LINC complex play an important role in the transmission of mechanical forces across the nuclear envelope and in nuclear movement and positioning. Probable anchoring protein which tethers the nucleus to the cytoskeleton by binding PLEC which can associate with the intermediate filament system. Plays a role in the regulation of aortic epithelial cell morphology, and is required for flow-induced centrosome polarization and directional migration in aortic endothelial cells. The polypeptide is Nesprin-3 (Syne3) (Mus musculus (Mouse)).